Here is a 520-residue protein sequence, read N- to C-terminus: Cytochrome P450 72A68 (520 aa).

A helical membrane pass occupies residues 11–31 (IILITVTFGLVYAWRVLNWMW). Cys-466 contacts heme.

Belongs to the cytochrome P450 family. The cofactor is heme.

It is found in the membrane. It carries out the reaction oleanolate + 3 reduced [NADPH--hemoprotein reductase] + 3 O2 = gypsogenate + 3 oxidized [NADPH--hemoprotein reductase] + 4 H2O + 4 H(+). Catalyzes the carboxylation of oleanolic acid at the C-23 position to form gypsogenic acid. Involved in the hemolytic saponin biosynthetic pathway. The chain is Cytochrome P450 72A68 from Medicago truncatula (Barrel medic).